A 557-amino-acid polypeptide reads, in one-letter code: NADP-dependent malic enzyme (557 aa).

The Proton donor role is filled by tyrosine 91. An NADP(+)-binding site is contributed by arginine 144. The Proton acceptor role is filled by lysine 162. A divalent metal cation-binding residues include glutamate 234, aspartate 235, and aspartate 258. Residues aspartate 258, 290 to 307 (GAGE…MAME), and asparagine 397 each bind NADP(+).

This sequence belongs to the malic enzymes family. As to quaternary structure, homotetramer. Requires Mg(2+) as cofactor. It depends on Mn(2+) as a cofactor.

Its subcellular location is the cytoplasm. It catalyses the reaction (S)-malate + NADP(+) = pyruvate + CO2 + NADPH. It carries out the reaction oxaloacetate + H(+) = pyruvate + CO2. The chain is NADP-dependent malic enzyme (ME1) from Anas platyrhynchos (Mallard).